A 160-amino-acid chain; its full sequence is Cytochrome b6-f complex subunit 4 (160 aa).

3 consecutive transmembrane segments (helical) span residues L36 to I56, L95 to E115, and A131 to I151.

This sequence belongs to the cytochrome b family. PetD subfamily. As to quaternary structure, the 4 large subunits of the cytochrome b6-f complex are cytochrome b6, subunit IV (17 kDa polypeptide, PetD), cytochrome f and the Rieske protein, while the 4 small subunits are PetG, PetL, PetM and PetN. The complex functions as a dimer.

Its subcellular location is the cellular thylakoid membrane. In terms of biological role, component of the cytochrome b6-f complex, which mediates electron transfer between photosystem II (PSII) and photosystem I (PSI), cyclic electron flow around PSI, and state transitions. The sequence is that of Cytochrome b6-f complex subunit 4 from Microcystis aeruginosa (strain NIES-843 / IAM M-2473).